A 74-amino-acid polypeptide reads, in one-letter code: High-potential iron-sulfur protein isozyme 2 (74 aa).

Cys36, Cys39, Cys53, and Cys67 together coordinate [4Fe-4S] cluster.

In terms of assembly, homodimer.

In terms of biological role, specific class of high-redox-potential 4Fe-4S ferredoxins. Functions in anaerobic electron transport in most purple and in some other photosynthetic bacteria and in at least one genus (Paracoccus) of halophilic, denitrifying bacteria. The polypeptide is High-potential iron-sulfur protein isozyme 2 (Ectothiorhodospira mobilis).